Here is a 570-residue protein sequence, read N- to C-terminus: Phosphoglucomutase 1 (570 aa).

Residue Ser-2 is modified to N-acetylserine. 2 residues coordinate alpha-D-glucose 1,6-bisphosphate: Arg-24 and Ser-120. Catalysis depends on Ser-120, which acts as the Phosphoserine intermediate. The Mg(2+) site is built by Ser-120, Asp-291, Asp-293, and Asp-295. Ser-120 carries the phosphoserine modification. Alpha-D-glucose 1,6-bisphosphate is bound by residues Asp-295, Arg-296, Thr-360, Glu-379, Ser-381, and Lys-392.

It belongs to the phosphohexose mutase family. In terms of assembly, monomer. Requires Mg(2+) as cofactor.

It is found in the cytoplasm. The enzyme catalyses alpha-D-glucose 1-phosphate = alpha-D-glucose 6-phosphate. It carries out the reaction O-phospho-L-seryl-[protein] + alpha-D-glucose 1-phosphate = alpha-D-glucose 1,6-bisphosphate + L-seryl-[protein]. It catalyses the reaction alpha-D-glucose 1,6-bisphosphate + L-seryl-[protein] = O-phospho-L-seryl-[protein] + alpha-D-glucose 6-phosphate. Functionally, minor phosphoglucomutase isozyme that catalyzes the reversible interconversion of alpha-D-glucose 1-phosphate and alpha-D-glucose 6-phosphate. The mechanism proceeds via the intermediate compound alpha-D-glucose 1,6-bisphosphate. Constitutes about 10-20% of the phosphoglucomutase activity in the cell. Key enzyme in hexose metabolism. The forward reaction is an essential step in the energy metabolism of galactose since the product of the galactose pathway enzymes in yeast is glucose 1-phosphate. The reverse reaction is an essential step for biosynthesis when carbon sources other than galactose are the energy source because glucose 1-phosphate is the starting point for the synthesis of UDP-glucose, which acts as a precursor for the synthesis of oligosaccharides and trehalose. In Saccharomyces cerevisiae (strain ATCC 204508 / S288c) (Baker's yeast), this protein is Phosphoglucomutase 1.